Consider the following 654-residue polypeptide: Translation factor GUF1, mitochondrial (654 aa).

A tr-type G domain is found at 57–237 (ENYRNFSIVA…SVIKNIPSPV (181 aa)). GTP contacts are provided by residues 66 to 73 (AHVDHGKS), 130 to 134 (DTPGH), and 184 to 187 (NKID).

The protein belongs to the TRAFAC class translation factor GTPase superfamily. Classic translation factor GTPase family. LepA subfamily.

Its subcellular location is the mitochondrion inner membrane. The catalysed reaction is GTP + H2O = GDP + phosphate + H(+). Its function is as follows. Promotes mitochondrial protein synthesis. May act as a fidelity factor of the translation reaction, by catalyzing a one-codon backward translocation of tRNAs on improperly translocated ribosomes. Binds to mitochondrial ribosomes in a GTP-dependent manner. This chain is Translation factor GUF1, mitochondrial, found in Candida albicans (strain WO-1) (Yeast).